The primary structure comprises 758 residues: Inhibitor of nuclear factor kappa-B kinase subunit alpha (758 aa).

Residues W15–C301 enclose the Protein kinase domain. ATP is bound by residues L21–V29 and K44. The active-site Proton acceptor is D145. Residues L456 to L477 are leucine-zipper. The tract at residues Q741–T746 is NEMO-binding.

This sequence belongs to the protein kinase superfamily. Ser/Thr protein kinase family. I-kappa-B kinase subfamily. As to quaternary structure, directly interacts with ikbkg/nemo.

The protein resides in the cytoplasm. The protein localises to the nucleus. It catalyses the reaction L-seryl-[I-kappa-B protein] + ATP = O-phospho-L-seryl-[I-kappa-B protein] + ADP + H(+). Its activity is regulated as follows. Activated when phosphorylated and inactivated when dephosphorylated. In terms of biological role, phosphorylates inhibitors of NF-kappa-B thus leading to the dissociation of the inhibitor/NF-kappa-B complex and ultimately the degradation of the inhibitor. Phosphorylates 'Ser-10' of histone H3 at NF-kappa-B-regulated promoters during inflammatory responses triggered by cytokines. In Danio rerio (Zebrafish), this protein is Inhibitor of nuclear factor kappa-B kinase subunit alpha (chuk).